The following is a 436-amino-acid chain: 3-ketoacyl-CoA thiolase (436 aa).

The Acyl-thioester intermediate role is filled by C99. Active-site proton acceptor residues include H392 and C422.

Belongs to the thiolase-like superfamily. Thiolase family. Heterotetramer of two alpha chains (FadJ) and two beta chains (FadI).

The protein resides in the cytoplasm. The enzyme catalyses an acyl-CoA + acetyl-CoA = a 3-oxoacyl-CoA + CoA. Its pathway is lipid metabolism; fatty acid beta-oxidation. In terms of biological role, catalyzes the final step of fatty acid oxidation in which acetyl-CoA is released and the CoA ester of a fatty acid two carbons shorter is formed. The polypeptide is 3-ketoacyl-CoA thiolase (Shewanella putrefaciens (strain CN-32 / ATCC BAA-453)).